The following is a 350-amino-acid chain: DNA polymerase IV (350 aa).

The UmuC domain occupies Ile-5–Gly-181. Residues Asp-9 and Asp-99 each coordinate Mg(2+). Glu-100 is a catalytic residue.

The protein belongs to the DNA polymerase type-Y family. As to quaternary structure, monomer. It depends on Mg(2+) as a cofactor.

It is found in the cytoplasm. The enzyme catalyses DNA(n) + a 2'-deoxyribonucleoside 5'-triphosphate = DNA(n+1) + diphosphate. Functionally, poorly processive, error-prone DNA polymerase involved in untargeted mutagenesis. Copies undamaged DNA at stalled replication forks, which arise in vivo from mismatched or misaligned primer ends. These misaligned primers can be extended by PolIV. Exhibits no 3'-5' exonuclease (proofreading) activity. May be involved in translesional synthesis, in conjunction with the beta clamp from PolIII. The polypeptide is DNA polymerase IV (Fusobacterium nucleatum subsp. nucleatum (strain ATCC 25586 / DSM 15643 / BCRC 10681 / CIP 101130 / JCM 8532 / KCTC 2640 / LMG 13131 / VPI 4355)).